An 856-amino-acid chain; its full sequence is Villin-like protein (856 aa).

Gelsolin-like repeat units lie at residues 22-74 (RKMV…EAQG), 146-186 (VSAT…SEKA), 263-307 (LVVL…QERK), 401-450 (LHRQ…DEIE), 521-561 (TRTM…DQRE), and 624-665 (LVLA…WKEA). Residues 762 to 796 (SQDSSENDLVRSPKSAGSRTSSSVSSTSATINGGL) form a disordered region. Positions 776 to 791 (SAGSRTSSSVSSTSAT) are enriched in low complexity. An HP domain is found at 790–856 (ATINGGLRRE…RQEKKQLGFF (67 aa)).

The protein belongs to the villin/gelsolin family. In terms of tissue distribution, ubiquitously expressed in 16 tissues examined.

Possible tumor suppressor. The chain is Villin-like protein (VILL) from Homo sapiens (Human).